The chain runs to 25 residues: Ocellatin-K1 (25 aa).

Ile25 carries the isoleucine amide modification.

As to expression, expressed by the skin glands.

The protein resides in the secreted. Has hemolytic and antibacterial activity. The polypeptide is Ocellatin-K1 (Leptodactylus knudseni (Knudsen's thin-toed frog)).